Reading from the N-terminus, the 114-residue chain is Protein U68 (114 aa).

Belongs to the herpesviridae UL96 family.

The polypeptide is Protein U68 (U68) (Homo sapiens (Human)).